Here is a 356-residue protein sequence, read N- to C-terminus: S-adenosylmethionine:tRNA ribosyltransferase-isomerase (356 aa).

Belongs to the QueA family. In terms of assembly, monomer.

The protein localises to the cytoplasm. The enzyme catalyses 7-aminomethyl-7-carbaguanosine(34) in tRNA + S-adenosyl-L-methionine = epoxyqueuosine(34) in tRNA + adenine + L-methionine + 2 H(+). Its pathway is tRNA modification; tRNA-queuosine biosynthesis. Functionally, transfers and isomerizes the ribose moiety from AdoMet to the 7-aminomethyl group of 7-deazaguanine (preQ1-tRNA) to give epoxyqueuosine (oQ-tRNA). The polypeptide is S-adenosylmethionine:tRNA ribosyltransferase-isomerase (Xanthomonas axonopodis pv. citri (strain 306)).